The chain runs to 236 residues: Small ribosomal subunit protein uS2c (236 aa).

Belongs to the universal ribosomal protein uS2 family.

The protein localises to the plastid. It is found in the chloroplast. The protein is Small ribosomal subunit protein uS2c (rps2) of Liriodendron tulipifera (Tuliptree).